The sequence spans 106 residues: ATP-dependent Clp protease adapter protein ClpS (106 aa).

The protein belongs to the ClpS family. Binds to the N-terminal domain of the chaperone ClpA.

Involved in the modulation of the specificity of the ClpAP-mediated ATP-dependent protein degradation. The polypeptide is ATP-dependent Clp protease adapter protein ClpS (Edwardsiella ictaluri (strain 93-146)).